A 728-amino-acid chain; its full sequence is MPCLLPTLLRATRAALLLQSPRVVAAPASQRLLSAPAQPAASPSSMDSAEELLAPLRLAVRQQGDFVRKLKEDKAPQVDVDRAVAELKARKRVLEAKELALQPKDDIVDRAKMEDTLKRRFFYDQAFAIYGGVSGLYDFGPVGCALKNNIIQTWRQHFIQEEQILEIDCTMLTPEPVLKTSGHVDKFADFMVKDVKNGECFRADHLLKAHLQKLMSDKKCSAEKKSEMESVLAQLDNYGQQELADLFVNYNVKSPTTGNDLSPPVPFNLMFQTFIGPGGNMPGYLRPETAQGIFLNFKRLLEFNQGKLPFAAAQIGNSFRNEISPRSGLIRVREFTMAEIEHFVDPTEKDHPKFPSVADLYLYLYSAKAQVTGQSARKMRLGDAVEQGVINNSVLGYFIGRIYLYLTKVGISPDKLRFRQHMENEMAHYACDCWDAESKTSYGWIEIVGCADRSCYDLSCHARATKVPLVAEKPLKEPKTVNVVQFEPNKGAVGKAYKKDAKLVLEYLGACDECYITEMELLLSEKGEFTIETEGKTFQLTKDMVSVKRFQKTLHVEEVVPSVIEPSFGLGRIMYTILEHTFHVREGDEQRTFFSFPAVVAPFKCSVLPLSQNQEFMPFVKELSEALTRNGVSHKVDDSSGSIGRRYARTDEIGVAFGITIDFDTVNKTPHTATLRDRDSMRQIRAEVSELPSVVRDLANGNITWADVEARYPLFEGQETGKKETVEE.

Residues Met1–Leu32 constitute a mitochondrion transit peptide. The WHEP-TRS domain maps to Leu52 to Val108. Residue Lys193 is modified to N6-acetyllysine. Position 288 (Glu288) interacts with glycine. Residues Arg320–Glu322 and Arg331–Val332 each bind ATP. A glycine-binding site is contributed by Glu339. Position 442 is a phosphotyrosine (Tyr442). Glu446–Ile447 provides a ligand contact to ATP. Lys490 carries the N6-acetyllysine modification. Glu565 to Ser567 is a binding site for glycine. Arg572 provides a ligand contact to ATP. Ser689 carries the post-translational modification Phosphoserine. Residue Thr725 is modified to Phosphothreonine.

Belongs to the class-II aminoacyl-tRNA synthetase family. As to quaternary structure, homodimer.

The protein resides in the cytoplasm. It localises to the mitochondrion. The protein localises to the cell projection. Its subcellular location is the axon. It is found in the secreted. The protein resides in the extracellular exosome. It carries out the reaction tRNA(Gly) + glycine + ATP = glycyl-tRNA(Gly) + AMP + diphosphate. It catalyses the reaction 2 ATP + H(+) = P(1),P(4)-bis(5'-adenosyl) tetraphosphate + diphosphate. Functionally, catalyzes the ATP-dependent ligation of glycine to the 3'-end of its cognate tRNA, via the formation of an aminoacyl-adenylate intermediate (Gly-AMP). Also produces diadenosine tetraphosphate (Ap4A), a universal pleiotropic signaling molecule needed for cell regulation pathways, by direct condensation of 2 ATPs. Thereby, may play a special role in Ap4A homeostasis. The protein is Glycine--tRNA ligase (Gars1) of Rattus norvegicus (Rat).